Here is a 211-residue protein sequence, read N- to C-terminus: Methylthioribulose-1-phosphate dehydratase (211 aa).

Zn(2+) is bound by residues His-101 and His-103.

Belongs to the aldolase class II family. MtnB subfamily. Requires Zn(2+) as cofactor.

It catalyses the reaction 5-(methylsulfanyl)-D-ribulose 1-phosphate = 5-methylsulfanyl-2,3-dioxopentyl phosphate + H2O. Its pathway is amino-acid biosynthesis; L-methionine biosynthesis via salvage pathway; L-methionine from S-methyl-5-thio-alpha-D-ribose 1-phosphate: step 2/6. Its function is as follows. Catalyzes the dehydration of methylthioribulose-1-phosphate (MTRu-1-P) into 2,3-diketo-5-methylthiopentyl-1-phosphate (DK-MTP-1-P). This is Methylthioribulose-1-phosphate dehydratase from Alcanivorax borkumensis (strain ATCC 700651 / DSM 11573 / NCIMB 13689 / SK2).